We begin with the raw amino-acid sequence, 430 residues long: MSEGLWIATAVAAVLVVIAALILGSVRYRRRRISLIFSSLSSGPSASDRSGSYTASSGITFSQTALPVQPADRIDTGELPAVGDDATVPRDSPRHTISDVLLPESELITSPDEPEAAVPHIDAIVPPEGRLDRLRGRLARTQNAFGRSILGLIVGGDLDEDSWQELEDTLLVADLGPVATESVMSALRSRLLNSNVHTESDARTMLRDVLISELQPDMDRSIRALPHADHPAVLLIVGVNGTGKTTTVGKLARVLVADGRRVVLGAADTFRAAAADQLQTWASRVGAELVRGVEGADPASVAFDAVDKGIGAGADVVVIDTAGRLHTKVGLMDELDKIKRVVTRRAAVDEVLLVLDATIGQNGLTQVRVFAEVVDITGAVLTKLDGTAKGGIVFRIQRELGVPVKLVGLGEGPDDLAPFEPAVFVDALLE.

Residues 75 to 95 (DTGELPAVGDDATVPRDSPRH) form a disordered region. GTP contacts are provided by residues 238 to 245 (GVNGTGKT), 320 to 324 (DTAGR), and 382 to 385 (TKLD).

The protein belongs to the GTP-binding SRP family. FtsY subfamily. As to quaternary structure, part of the signal recognition particle protein translocation system, which is composed of SRP and FtsY.

It is found in the cell membrane. The protein resides in the cytoplasm. It catalyses the reaction GTP + H2O = GDP + phosphate + H(+). Functionally, involved in targeting and insertion of nascent membrane proteins into the cytoplasmic membrane. Acts as a receptor for the complex formed by the signal recognition particle (SRP) and the ribosome-nascent chain (RNC). The protein is Signal recognition particle receptor FtsY of Mycobacterium leprae (strain TN).